Reading from the N-terminus, the 72-residue chain is Translation initiation factor IF-1 (72 aa).

Positions 1–72 (MAKEELLEFP…TKGRINYRFK (72 aa)) constitute an S1-like domain.

The protein belongs to the IF-1 family. Component of the 30S ribosomal translation pre-initiation complex which assembles on the 30S ribosome in the order IF-2 and IF-3, IF-1 and N-formylmethionyl-tRNA(fMet); mRNA recruitment can occur at any time during PIC assembly.

Its subcellular location is the cytoplasm. One of the essential components for the initiation of protein synthesis. Stabilizes the binding of IF-2 and IF-3 on the 30S subunit to which N-formylmethionyl-tRNA(fMet) subsequently binds. Helps modulate mRNA selection, yielding the 30S pre-initiation complex (PIC). Upon addition of the 50S ribosomal subunit IF-1, IF-2 and IF-3 are released leaving the mature 70S translation initiation complex. In Dinoroseobacter shibae (strain DSM 16493 / NCIMB 14021 / DFL 12), this protein is Translation initiation factor IF-1.